We begin with the raw amino-acid sequence, 919 residues long: Alpha-amylase (919 aa).

Positions 1-33 (MPATRRTARVRRVAAVTVTALAAALLPPLAARA) are cleaved as a signal peptide. Asn182 and Asp281 together coordinate Ca(2+). Asp312 (nucleophile) is an active-site residue. His316 serves as a coordination point for Ca(2+). Glu346 functions as the Proton donor in the catalytic mechanism. The segment at 704 to 729 (ASGRLHHRHPARRGGAHRRLPGPRGR) is disordered. The span at 707–724 (RLHHRHPARRGGAHRRLP) shows a compositional bias: basic residues.

The protein belongs to the glycosyl hydrolase 13 family. As to quaternary structure, monomer. It depends on Ca(2+) as a cofactor.

Its subcellular location is the secreted. It carries out the reaction Endohydrolysis of (1-&gt;4)-alpha-D-glucosidic linkages in polysaccharides containing three or more (1-&gt;4)-alpha-linked D-glucose units.. This Streptomyces lividans protein is Alpha-amylase (amy).